The sequence spans 464 residues: Arginine biosynthesis bifunctional protein ArgJ, chloroplastic (464 aa).

Substrate is bound by residues Thr-208, Lys-234, Thr-245, Glu-332, Asn-459, and Thr-464. Thr-245 acts as the Nucleophile in catalysis.

This sequence belongs to the ArgJ family. In terms of assembly, heterodimer of an alpha and a beta chain.

It is found in the plastid. Its subcellular location is the chloroplast. The enzyme catalyses N(2)-acetyl-L-ornithine + L-glutamate = N-acetyl-L-glutamate + L-ornithine. It carries out the reaction L-glutamate + acetyl-CoA = N-acetyl-L-glutamate + CoA + H(+). It participates in amino-acid biosynthesis; L-arginine biosynthesis; L-ornithine and N-acetyl-L-glutamate from L-glutamate and N(2)-acetyl-L-ornithine (cyclic): step 1/1. It functions in the pathway amino-acid biosynthesis; L-arginine biosynthesis; N(2)-acetyl-L-ornithine from L-glutamate: step 1/4. In terms of biological role, catalyzes two activities which are involved in the cyclic version of arginine biosynthesis: the synthesis of acetylglutamate from glutamate and acetyl-CoA, and of ornithine by transacetylation between acetylornithine and glutamate. This chain is Arginine biosynthesis bifunctional protein ArgJ, chloroplastic, found in Zea mays (Maize).